The chain runs to 99 residues: Large ribosomal subunit protein bL28 (99 aa).

Belongs to the bacterial ribosomal protein bL28 family.

The polypeptide is Large ribosomal subunit protein bL28 (Caulobacter vibrioides (strain ATCC 19089 / CIP 103742 / CB 15) (Caulobacter crescentus)).